A 195-amino-acid polypeptide reads, in one-letter code: 7-methyl-GTP pyrophosphatase (195 aa).

Asp-71 functions as the Proton acceptor in the catalytic mechanism.

It belongs to the Maf family. YceF subfamily. A divalent metal cation is required as a cofactor.

The protein resides in the cytoplasm. The catalysed reaction is N(7)-methyl-GTP + H2O = N(7)-methyl-GMP + diphosphate + H(+). Its function is as follows. Nucleoside triphosphate pyrophosphatase that hydrolyzes 7-methyl-GTP (m(7)GTP). May have a dual role in cell division arrest and in preventing the incorporation of modified nucleotides into cellular nucleic acids. This is 7-methyl-GTP pyrophosphatase from Shewanella oneidensis (strain ATCC 700550 / JCM 31522 / CIP 106686 / LMG 19005 / NCIMB 14063 / MR-1).